Reading from the N-terminus, the 141-residue chain is Small ribosomal subunit protein uS12 (141 aa).

This sequence belongs to the universal ribosomal protein uS12 family. Part of the 30S ribosomal subunit.

Functionally, with S4 and S5 plays an important role in translational accuracy. Located at the interface of the 30S and 50S subunits. The protein is Small ribosomal subunit protein uS12 of Methanosphaera stadtmanae (strain ATCC 43021 / DSM 3091 / JCM 11832 / MCB-3).